Consider the following 340-residue polypeptide: Sulfotransferase ppzF (340 aa).

It participates in secondary metabolite biosynthesis. Its function is as follows. Sulfotransferase; part of the gene cluster that mediates the biosynthesis of pyrrolopyrazines, secondary metabolites showing insecticidal activity. The role of ppzF within the pathway has still to be determined. The single multifunctional NRPS ppzA is sufficient to produce peramine via condensation of 1-pyrroline-5-carboxylate and arginine, N-methylation of the alpha-amino group of arginine and reduction of the thioester and the cyclization to form an iminium ion resulting in release from the peptide synthetase. Deprotonation of this intermediate and oxidation of the pyrroline ring would give rise to peramine. In Epichloe species that produce only peramine, the peramine synthetase gene is not localized in a gene cluster, in contrast to Metarhizium species that contain additional pyrrolopyrazine biosynthesis genes. The 2-oxoglutarate-Fe(II) type oxidoreductase ppzC hydroxylates peramine to yield the newly identified compound 8-hydroxyperamine whereas ppzD converts L-proline into trans-4-hydroxy-L-proline, a precursor of peramine biosynthesis. This Metarhizium rileyi (strain RCEF 4871) (Nomuraea rileyi) protein is Sulfotransferase ppzF.